The sequence spans 426 residues: Phosphomethylpyrimidine synthase (426 aa).

Substrate contacts are provided by residues Asn-65, Met-94, Tyr-123, His-162, 184-186 (SRG), 225-228 (DGMR), and Glu-264. Residue His-268 participates in Zn(2+) binding. Tyr-291 is a substrate binding site. Zn(2+) is bound at residue His-332. [4Fe-4S] cluster contacts are provided by Cys-408, Cys-411, and Cys-415.

This sequence belongs to the ThiC family. It depends on [4Fe-4S] cluster as a cofactor.

The enzyme catalyses 5-amino-1-(5-phospho-beta-D-ribosyl)imidazole + S-adenosyl-L-methionine = 4-amino-2-methyl-5-(phosphooxymethyl)pyrimidine + CO + 5'-deoxyadenosine + formate + L-methionine + 3 H(+). Its pathway is cofactor biosynthesis; thiamine diphosphate biosynthesis. In terms of biological role, catalyzes the synthesis of the hydroxymethylpyrimidine phosphate (HMP-P) moiety of thiamine from aminoimidazole ribotide (AIR) in a radical S-adenosyl-L-methionine (SAM)-dependent reaction. This chain is Phosphomethylpyrimidine synthase, found in Methanococcus maripaludis (strain DSM 14266 / JCM 13030 / NBRC 101832 / S2 / LL).